The chain runs to 139 residues: D-ribose pyranase (139 aa).

The active-site Proton donor is the H20. Substrate is bound by residues D28, H106, and 128-130 (YAN).

Belongs to the RbsD / FucU family. RbsD subfamily. As to quaternary structure, homodecamer.

It is found in the cytoplasm. It carries out the reaction beta-D-ribopyranose = beta-D-ribofuranose. Its pathway is carbohydrate metabolism; D-ribose degradation; D-ribose 5-phosphate from beta-D-ribopyranose: step 1/2. Functionally, catalyzes the interconversion of beta-pyran and beta-furan forms of D-ribose. The sequence is that of D-ribose pyranase from Shewanella halifaxensis (strain HAW-EB4).